The sequence spans 520 residues: Bile acid--coenzyme A ligase (520 aa).

Belongs to the ATP-dependent AMP-binding enzyme family. As to quaternary structure, homodimer. It depends on Mg(2+) as a cofactor.

The enzyme catalyses cholate + ATP + CoA = choloyl-CoA + AMP + diphosphate. It catalyses the reaction deoxycholate + ATP + CoA = deoxycholoyl-CoA + AMP + diphosphate. It carries out the reaction chenodeoxycholate + ATP + CoA = chenodeoxycholoyl-CoA + AMP + diphosphate. The protein operates within lipid metabolism; bile acid biosynthesis. Inhibited by diphosphate. Functionally, functions in the bile acid 7alpha-dehydroxylation pathway, which forms secondary bile acids via the 7alpha-dehydroxylation of primary bile acids, and is carried out by intestinal anaerobic bacteria. Catalyzes the initial step in this pathway, i.e. the ATP-dependent thioesterification of primary bile acids with coenzyme A. Is active with C-24 bile acids with free carboxyl groups such as cholate, deoxycholate and chenodeoxycholate. Produces AMP and pyrophosphate in addition to the bile acid-CoA thioester. The protein is Bile acid--coenzyme A ligase of Clostridium scindens (strain JCM 10418 / VPI 12708).